We begin with the raw amino-acid sequence, 201 residues long: MDLSLLWVLLPLVTMAWGQYGDYGYPYQQYHDYSDDGWVNLNRQGFSYQCPQGQVIVAVRSIFSKKEGSDRQWNYACMPTPQSLGEPTECWWEEINRAGMEWYQTCSNNGLVAGFQSRYFESVLDREWQFYCCRYSKRCPYSCWLTTEYPGHYGEEMDMISYNYDYYIRGATTTFSAVERDRQWKFIMCRMTEYDCEFANV.

A signal peptide spans 1–18 (MDLSLLWVLLPLVTMAWG). Gln-19 is modified (pyrrolidone carboxylic acid). At Tyr-23 the chain carries Sulfotyrosine. 4 consecutive repeat copies span residues 26–79 (PYQQ…ACMP), 70–75 (DRQWNY), 80–135 (TPQS…CCRY), and 125–130 (DREWQF). The interval 26-186 (PYQQYHDYSD…AVERDRQWKF (161 aa)) is 2 X 53-55 AA tandem repeats. Cystine bridges form between Cys-50–Cys-77, Cys-90–Cys-132, Cys-106–Cys-133, Cys-139–Cys-196, and Cys-143–Cys-189. The segment at 70–186 (DRQWNYACMP…AVERDRQWKF (117 aa)) is 3 X 6 AA repeats of D-R-[EQ]-W-[NQK]-[FY]. Sulfotyrosine is present on residues Tyr-162, Tyr-164, Tyr-166, and Tyr-167. Residues 181–186 (DRQWKF) form a 3-3 repeat. Residue Tyr-194 is modified to Sulfotyrosine.

Belongs to the dermatopontin family. As to quaternary structure, interacts with TGFB1, DCN and collagen. Post-translationally, sulfated on tyrosine residue(s). Expressed in fibroblasts, heart, skeletal muscle, brain and pancreas. Expressed at an intermediate level in lung and kidney, and at a low level in liver and placenta. Expressed at a lower level in fibroblasts from hypertrophic scar lesional skin and in fibroblasts from patients with systemic sclerosis than in normal skin fibroblasts.

It is found in the secreted. It localises to the extracellular space. The protein resides in the extracellular matrix. Functionally, seems to mediate adhesion by cell surface integrin binding. May serve as a communication link between the dermal fibroblast cell surface and its extracellular matrix environment. Enhances TGFB1 activity. Inhibits cell proliferation. Accelerates collagen fibril formation, and stabilizes collagen fibrils against low-temperature dissociation. This is Dermatopontin (DPT) from Homo sapiens (Human).